Reading from the N-terminus, the 1032-residue chain is Argonaute protein hrde-1 (1032 aa).

2 disordered regions span residues 1 to 51 (MADL…PIGR) and 298 to 375 (KLSE…YSPS). Positions 1 to 551 (MADLLDKIMG…IQMTAKLLPP (551 aa)) are required to recruit the small-RNA amplification machinery to gene targets and promote gene silencing. Positions 18–33 (PKRDNRMNQDKDEPTS) are enriched in basic and acidic residues. A compositionally biased stretch (gly residues) spans 303–313 (KGGGGGRGGYG). Composition is skewed to basic and acidic residues over residues 315 to 335 (SDSR…RDFR) and 343 to 364 (GNDR…RRDS). Positions 376-481 (DAAELEHAFG…FPMELLRIAP (106 aa)) constitute a PAZ domain. In terms of domain architecture, Piwi spans 650–977 (DILVGIAREK…LAKRGRNNYK (328 aa)).

This sequence belongs to the argonaute family. WAGO subfamily. Expressed in the nuclei of male and female germ cells.

The protein resides in the cytoplasm. It localises to the cytoplasmic ribonucleoprotein granule. The protein localises to the nucleus. Functionally, argonaute protein which is involved in the endogenous small interfering RNA (endo-siRNA) pathway and is required for RNA-mediated gene silencing (RNAi) in the germline. Interacts with secondary 22G-RNAs in an hrde-2-dependent manner; 22G-RNAs are RNA-dependent RNA polymerase-derived endo-siRNAs, typically 22 nucleotides in length with a 5'-guanosine residue. Plays a key role in transgenerational epigenetic inheritance and germline immortality. May be involved in transgenerational gene silencing both by inducing subnuclear-co-localization of target genes into heterochromatin and by activation of small RNA amplification in the nuage. This chain is Argonaute protein hrde-1, found in Caenorhabditis elegans.